The chain runs to 663 residues: Protein LNK2 (663 aa).

Disordered regions lie at residues 528 to 549 (HYTSDTSHSNKTSQDDQEVIPR) and 590 to 663 (MEGP…KRKL). A compositionally biased stretch (basic and acidic residues) spans 602 to 629 (GTEEKGNFPKCSIRETHLTKQKAQKEEG). Positions 639-648 (APNSGSSSTV) are enriched in polar residues.

Interacts with CCA1, LHY, REV4 and REV8, but not with PRR7 or PRR9. Expressed in roots, stems, leaves, seedlings, cotyledons, inflorescences and siliques. Highest expression in root tips, young leaves and vasculatur tissues.

It is found in the nucleus. Its function is as follows. Transcriptional coactivator necessary for expression of the clock genes PRR5 and TOC1. Antagonizes REV8 function in the regulation of anthocyanin accumulation. Involved in red light input to the clock. Activates clock-controlled genes with afternoon peak. Mediates light inhibition of hypocotyl elongation. Unable to bind to DNA, but recruited to the evening element (EE)-containing region of the PRR5 and TOC1 promoters through its interaction with the DNA binding proteins REV8 and REV4. The protein is Protein LNK2 of Arabidopsis thaliana (Mouse-ear cress).